Reading from the N-terminus, the 482-residue chain is MREKLIFELSRKGRKGYSLSGNELPEQPLENIIPSKYLRTTPAELPEVAESEVVRHFVRLSNLNYHVDKNMYPLGSCTMKYNPKINDYTCDLPGFSALHPLQPGETTQGALQLMFELAEMLREIAGMAAVTLQPAAGAHGELTGILLIKKYHESIGSKRHKLLVVDSAHGTNPASAALAGYDIISVKGNADGRTDLDDLRSKLDGDVAALMLTNPNTIGLFETEILAISKMVHDNGSLLYMDGANMNALLGITRPGDMGFDVVHYNLHKTFAAPHGGGGPGSGPVGVSEKLIPFLLVPVIVKEGTTYKLSYDRPESIGRMMNFYGNFAVLVRAYTYIRMLGPDGLRRVSENAIINANYLLSLLLESYDLPYPKPVMHEFCLSGDRQKKAHGVKTLDIAKRLLDYGFHAPTIYFPLIVSEALMIEPTETESKETLDVFAQALLSIADEAANNPALVTSAPVTTPVKRLDDAMASRQLNICCSL.

Position 269 is an N6-(pyridoxal phosphate)lysine (lysine 269).

This sequence belongs to the GcvP family. C-terminal subunit subfamily. As to quaternary structure, the glycine cleavage system is composed of four proteins: P, T, L and H. In this organism, the P 'protein' is a heterodimer of two subunits. It depends on pyridoxal 5'-phosphate as a cofactor.

The catalysed reaction is N(6)-[(R)-lipoyl]-L-lysyl-[glycine-cleavage complex H protein] + glycine + H(+) = N(6)-[(R)-S(8)-aminomethyldihydrolipoyl]-L-lysyl-[glycine-cleavage complex H protein] + CO2. In terms of biological role, the glycine cleavage system catalyzes the degradation of glycine. The P protein binds the alpha-amino group of glycine through its pyridoxal phosphate cofactor; CO(2) is released and the remaining methylamine moiety is then transferred to the lipoamide cofactor of the H protein. The sequence is that of Probable glycine dehydrogenase (decarboxylating) subunit 2 from Pelodictyon phaeoclathratiforme (strain DSM 5477 / BU-1).